Here is a 150-residue protein sequence, read N- to C-terminus: Large ribosomal subunit protein bL9 (150 aa).

This sequence belongs to the bacterial ribosomal protein bL9 family.

Binds to the 23S rRNA. This is Large ribosomal subunit protein bL9 from Erwinia tasmaniensis (strain DSM 17950 / CFBP 7177 / CIP 109463 / NCPPB 4357 / Et1/99).